Reading from the N-terminus, the 98-residue chain is snRNA-activating protein complex subunit 5 (98 aa).

The disordered stretch occupies residues 75 to 98; sequence ALELSTRSHVQEEEEEEEEEEEDS. A compositionally biased stretch (acidic residues) spans 86–98; sequence EEEEEEEEEEEDS.

In terms of assembly, part of the SNAPc complex composed of 5 subunits: SNAPC1, SNAPC2, SNAPC3, SNAPC4 and SNAPC5. SNAPC5 interacts with SNAPC4.

The protein resides in the nucleus. Functionally, part of the SNAPc complex required for the transcription of both RNA polymerase II and III small-nuclear RNA genes. Binds to the proximal sequence element (PSE), a non-TATA-box basal promoter element common to these 2 types of genes. Recruits TBP and BRF2 to the U6 snRNA TATA box. This is snRNA-activating protein complex subunit 5 (SNAPC5) from Bos taurus (Bovine).